The sequence spans 135 residues: Nucleoside diphosphate kinase (135 aa).

ATP contacts are provided by lysine 11, phenylalanine 59, arginine 87, threonine 93, arginine 104, and asparagine 114. The Pros-phosphohistidine intermediate role is filled by histidine 117.

It belongs to the NDK family. As to quaternary structure, homotetramer. The cofactor is Mg(2+).

The protein resides in the cytoplasm. The enzyme catalyses a 2'-deoxyribonucleoside 5'-diphosphate + ATP = a 2'-deoxyribonucleoside 5'-triphosphate + ADP. It catalyses the reaction a ribonucleoside 5'-diphosphate + ATP = a ribonucleoside 5'-triphosphate + ADP. Major role in the synthesis of nucleoside triphosphates other than ATP. The ATP gamma phosphate is transferred to the NDP beta phosphate via a ping-pong mechanism, using a phosphorylated active-site intermediate. This chain is Nucleoside diphosphate kinase, found in Marinomonas sp. (strain MWYL1).